A 365-amino-acid polypeptide reads, in one-letter code: UDP-N-acetylglucosamine--N-acetylmuramyl-(pentapeptide) pyrophosphoryl-undecaprenol N-acetylglucosamine transferase (365 aa).

Residues 11 to 13 (TGG), Asn124, Arg165, Ser192, Ile246, and Gln291 contribute to the UDP-N-acetyl-alpha-D-glucosamine site.

The protein belongs to the glycosyltransferase 28 family. MurG subfamily.

It localises to the cell inner membrane. The catalysed reaction is di-trans,octa-cis-undecaprenyl diphospho-N-acetyl-alpha-D-muramoyl-L-alanyl-D-glutamyl-meso-2,6-diaminopimeloyl-D-alanyl-D-alanine + UDP-N-acetyl-alpha-D-glucosamine = di-trans,octa-cis-undecaprenyl diphospho-[N-acetyl-alpha-D-glucosaminyl-(1-&gt;4)]-N-acetyl-alpha-D-muramoyl-L-alanyl-D-glutamyl-meso-2,6-diaminopimeloyl-D-alanyl-D-alanine + UDP + H(+). It functions in the pathway cell wall biogenesis; peptidoglycan biosynthesis. Functionally, cell wall formation. Catalyzes the transfer of a GlcNAc subunit on undecaprenyl-pyrophosphoryl-MurNAc-pentapeptide (lipid intermediate I) to form undecaprenyl-pyrophosphoryl-MurNAc-(pentapeptide)GlcNAc (lipid intermediate II). This chain is UDP-N-acetylglucosamine--N-acetylmuramyl-(pentapeptide) pyrophosphoryl-undecaprenol N-acetylglucosamine transferase, found in Nitratidesulfovibrio vulgaris (strain ATCC 29579 / DSM 644 / CCUG 34227 / NCIMB 8303 / VKM B-1760 / Hildenborough) (Desulfovibrio vulgaris).